Consider the following 151-residue polypeptide: NADPH-dependent 7-cyano-7-deazaguanine reductase (151 aa).

Cysteine 51 acts as the Thioimide intermediate in catalysis. The active-site Proton donor is the aspartate 58. Residues 73-75 (VES) and 92-93 (HE) contribute to the substrate site.

This sequence belongs to the GTP cyclohydrolase I family. QueF type 1 subfamily.

The protein resides in the cytoplasm. The catalysed reaction is 7-aminomethyl-7-carbaguanine + 2 NADP(+) = 7-cyano-7-deazaguanine + 2 NADPH + 3 H(+). The protein operates within tRNA modification; tRNA-queuosine biosynthesis. In terms of biological role, catalyzes the NADPH-dependent reduction of 7-cyano-7-deazaguanine (preQ0) to 7-aminomethyl-7-deazaguanine (preQ1). This Bacteroides fragilis (strain YCH46) protein is NADPH-dependent 7-cyano-7-deazaguanine reductase.